The sequence spans 164 residues: 16S rRNA aminocarboxypropyltransferase (164 aa).

S-adenosyl-L-methionine-binding residues include T18, I66, L87, and S106.

This sequence belongs to the TDD superfamily. TSR3 family.

It is found in the cytoplasm. It catalyses the reaction an N(1)-methylpseudouridine in rRNA + S-adenosyl-L-methionine = N(1)-methyl-N(3)-[(3S)-3-amino-3-carboxypropyl]pseudouridine in rRNA + S-methyl-5'-thioadenosine + H(+). In terms of biological role, aminocarboxypropyltransferase that catalyzes the aminocarboxypropyl transfer on pseudouridine corresponding to position 914 in M.jannaschii 16S rRNA. It constitutes the last step in biosynthesis of the hypermodified N1-methyl-N3-(3-amino-3-carboxypropyl) pseudouridine (m1acp3-Psi). This is 16S rRNA aminocarboxypropyltransferase from Thermoplasma volcanium (strain ATCC 51530 / DSM 4299 / JCM 9571 / NBRC 15438 / GSS1).